Here is a 539-residue protein sequence, read N- to C-terminus: Glutathione synthetase, chloroplastic (539 aa).

Residues 1–61 (MGSGCSSLSY…SPLRCGRSFK (61 aa)) constitute a chloroplast transit peptide. Residue Arg193 participates in substrate binding. An ATP-binding site is contributed by Glu209. Mg(2+) is bound by residues Glu209 and Asn211. Substrate is bound by residues 213-216 (ISCS), 281-283 (ERN), Gln287, and 335-338 (RSGY). Residues Lys374, 428–437 (KPQREGGGNN), Tyr439, 464–467 (MQRI), and Glu490 each bind ATP. A Mg(2+)-binding site is contributed by Glu432. Arg515 contributes to the substrate binding site. Residues Lys517 and Glu523 each coordinate ATP. 526-527 (VA) is a binding site for substrate.

It belongs to the eukaryotic GSH synthase family. As to quaternary structure, homodimer. It depends on Mg(2+) as a cofactor.

It localises to the plastid. Its subcellular location is the chloroplast. The enzyme catalyses gamma-L-glutamyl-L-cysteine + glycine + ATP = glutathione + ADP + phosphate + H(+). Its pathway is sulfur metabolism; glutathione biosynthesis; glutathione from L-cysteine and L-glutamate: step 2/2. The sequence is that of Glutathione synthetase, chloroplastic (GSH2) from Arabidopsis thaliana (Mouse-ear cress).